Here is a 193-residue protein sequence, read N- to C-terminus: Interferon epsilon (193 aa).

The signal sequence occupies residues 1–21 (MINKSFFEIMLVLLASSTGFS). A disulfide bridge connects residues cysteine 53 and cysteine 163. Asparagine 139 carries an N-linked (GlcNAc...) asparagine glycan.

This sequence belongs to the alpha/beta interferon family.

The protein resides in the secreted. Its function is as follows. Type I interferon required for maintaining basal levels of IFN-regulated genes, including 2'-5'-oligoadenylate synthetase, IRF7 and ISG15, in the female reproductive tract. Directly mediates protection against viral and bacterial genital infections. The sequence is that of Interferon epsilon (IFNE) from Sus scrofa (Pig).